We begin with the raw amino-acid sequence, 187 residues long: Peptide deformylase 2 (187 aa).

Cys-107 and His-149 together coordinate Fe cation. Glu-150 is an active-site residue. A Fe cation-binding site is contributed by His-153.

Belongs to the polypeptide deformylase family. It depends on Fe(2+) as a cofactor.

The catalysed reaction is N-terminal N-formyl-L-methionyl-[peptide] + H2O = N-terminal L-methionyl-[peptide] + formate. Removes the formyl group from the N-terminal Met of newly synthesized proteins. Requires at least a dipeptide for an efficient rate of reaction. N-terminal L-methionine is a prerequisite for activity but the enzyme has broad specificity at other positions. This is Peptide deformylase 2 from Gloeobacter violaceus (strain ATCC 29082 / PCC 7421).